The primary structure comprises 210 residues: Ras-related protein Rab-43 (210 aa).

Residue 23–30 (GDASVGKT) participates in GTP binding. The Effector region motif lies at 45-53 (QGSTIGVDF). Residue serine 47 is modified to Phosphoserine. Position 71–75 (71–75 (DTAGQ)) interacts with GTP. Threonine 80 is modified (phosphothreonine). GTP contacts are provided by residues 129–132 (NKSD) and 161–162 (AK). Residues cysteine 208 and cysteine 210 are each lipidated (S-geranylgeranyl cysteine). Cysteine methyl ester is present on cysteine 210.

Belongs to the small GTPase superfamily. Rab family. In terms of assembly, interacts with GDI1, GDI2 and CHM; phosphorylation at Thr-80 disrupts these interactions.

It localises to the cytoplasmic vesicle. It is found in the phagosome. The protein localises to the phagosome membrane. The protein resides in the golgi apparatus. Its subcellular location is the trans-Golgi network membrane. It localises to the trans-Golgi network. In terms of biological role, the small GTPases Rab are key regulators of intracellular membrane trafficking, from the formation of transport vesicles to their fusion with membranes. Rabs cycle between an inactive GDP-bound form and an active GTP-bound form that is able to recruit to membranes different set of downstream effectors directly responsible for vesicle formation, movement, tethering and fusion. The low intrinsic GTPase activity of RAB43 is activated by USP6NL. Involved in retrograde transport from the endocytic pathway to the Golgi apparatus. Involved in the transport of Shiga toxin from early and recycling endosomes to the trans-Golgi network. Required for the structural integrity of the Golgi complex. Plays a role in the maturation of phagosomes that engulf pathogens, such as S.aureus and Mycobacterium. The polypeptide is Ras-related protein Rab-43 (Rab43) (Rattus norvegicus (Rat)).